The following is a 538-amino-acid chain: NAD(P)H-quinone oxidoreductase chain 4 1 (538 aa).

13 helical membrane-spanning segments follow: residues 7-27 (FPWL…IPII), 37-57 (WYGL…FWHY), 88-108 (LSMP…FAAW), 116-136 (LFYG…VAQD), 137-157 (LLLF…LISI), 170-190 (FILY…ALAF), 210-230 (AIEL…LPIF), 244-264 (SAPG…YALI), 278-298 (FAPV…CCAF), 315-335 (MGFV…GAVL), 336-356 (QMVS…VTYE), 388-408 (LALP…GIAT), and 418-438 (VVVV…LLSM).

The protein belongs to the complex I subunit 4 family.

The protein localises to the cellular thylakoid membrane. It carries out the reaction a plastoquinone + NADH + (n+1) H(+)(in) = a plastoquinol + NAD(+) + n H(+)(out). The enzyme catalyses a plastoquinone + NADPH + (n+1) H(+)(in) = a plastoquinol + NADP(+) + n H(+)(out). NDH-1 shuttles electrons from NAD(P)H, via FMN and iron-sulfur (Fe-S) centers, to quinones in the respiratory chain. The immediate electron acceptor for the enzyme in this species is believed to be plastoquinone. Couples the redox reaction to proton translocation (for every two electrons transferred, four hydrogen ions are translocated across the cytoplasmic membrane), and thus conserves the redox energy in a proton gradient. The sequence is that of NAD(P)H-quinone oxidoreductase chain 4 1 from Nostoc sp. (strain PCC 7120 / SAG 25.82 / UTEX 2576).